Consider the following 481-residue polypeptide: 1-acylglycerol-3-phosphate O-acyltransferase PNPLA3 (481 aa).

Topologically, residues 1–41 are cytoplasmic; sequence MYDAERGWSLSFAGCGFLGFYHVGATRCLSEHAPHLLRDAR. Positions 10–179 constitute a PNPLA domain; the sequence is LSFAGCGFLG…SDNVPFIDAK (170 aa). The GXGXXG motif lies at 14–19; the sequence is GCGFLG. Residues 42-62 traverse the membrane as a helical; Signal-anchor for type II membrane protein segment; that stretch reads MLFGASAGALHCVGVLSGIPL. The GXSXG signature appears at 45 to 49; sequence GASAG. The active-site Nucleophile is the S47. The Lumenal segment spans residues 63–481; the sequence is EQTLQVLSDL…FPSFSLEKSL (419 aa). N89 is a glycosylation site (N-linked (GlcNAc...) asparagine). D166 acts as the Proton acceptor in catalysis. The DGA/G signature appears at 166–168; it reads DGG. Residue N280 is glycosylated (N-linked (GlcNAc...) asparagine).

Its subcellular location is the membrane. The protein resides in the lipid droplet. It catalyses the reaction a 1-acyl-sn-glycero-3-phosphate + an acyl-CoA = a 1,2-diacyl-sn-glycero-3-phosphate + CoA. It carries out the reaction a triacylglycerol + H2O = a diacylglycerol + a fatty acid + H(+). The enzyme catalyses a 1-acylglycerol + a 1,3-diacylglycerol = a triacylglycerol + glycerol. The catalysed reaction is a 1-acylglycerol + a 1,2-diacylglycerol = a triacylglycerol + glycerol. It catalyses the reaction 2 a 1-acylglycerol = a 1,2-diacylglycerol + glycerol. It carries out the reaction 1-(9Z-octadecenoyl)-sn-glycero-3-phosphate + (9Z)-octadecenoyl-CoA = 1,2-di-(9Z-octadecenoyl)-sn-glycero-3-phosphate + CoA. The enzyme catalyses 1-(9Z-octadecenoyl)-sn-glycero-3-phosphate + hexadecanoyl-CoA = 1-(9Z)-octadecenoyl-2-hexadecanoyl-sn-glycero-3-phosphate + CoA. The catalysed reaction is 1-(9Z-octadecenoyl)-sn-glycero-3-phosphate + (9Z,12Z)-octadecadienoyl-CoA = 1-(9Z)-octadecenoyl-2-(9Z,12Z)-octadecadienoyl-sn-glycero-3-phosphate + CoA. It catalyses the reaction 1-(9Z-octadecenoyl)-sn-glycero-3-phosphate + (5Z,8Z,11Z,14Z)-eicosatetraenoyl-CoA = 1-(9Z)-octadecenoyl-2-(5Z,8Z,11Z,14Z)-eicosatetraenoyl-sn-glycero-3-phosphate + CoA. It carries out the reaction 2 1-(9Z-octadecenoyl)-glycerol = 1,2-di-(9Z-octadecenoyl)-glycerol + glycerol. The enzyme catalyses 1-(9Z-octadecenoyl)-glycerol + 1,2-di-(9Z-octadecenoyl)-glycerol = 1,2,3-tri-(9Z-octadecenoyl)-glycerol + glycerol. The catalysed reaction is 1-(9Z-octadecenoyl)-glycerol + 1,3-di-(9Z-octadecenoyl)-glycerol = 1,2,3-tri-(9Z-octadecenoyl)-glycerol + glycerol. It catalyses the reaction 1,2,3-tri-(9Z-octadecenoyl)-glycerol + H2O = 1,3-di-(9Z-octadecenoyl)-glycerol + (9Z)-octadecenoate + H(+). It carries out the reaction a 1,2-diacyl-sn-glycero-3-phosphocholine + H2O = a 1-acyl-sn-glycero-3-phosphocholine + a fatty acid + H(+). The protein operates within phospholipid metabolism. It participates in glycerolipid metabolism. The triglyceride lipase activity is inhibited by BEL ((E)-6-(bromomethylene)-3-(1-naphthalenyl)-2H-tetrahydropyran-2-one), a suicide substrate inhibitor. Specifically catalyzes coenzyme A (CoA)-dependent acylation of 1-acyl-sn-glycerol 3-phosphate (2-lysophosphatidic acid/LPA) to generate phosphatidic acid (PA), an important metabolic intermediate and precursor for both triglycerides and glycerophospholipids. Does not esterify other lysophospholipids. Acyl donors are long chain (at least C16) fatty acyl-CoAs: arachidonoyl-CoA, linoleoyl-CoA, oleoyl-CoA and at a lesser extent palmitoyl-CoA. Additionally possesses low triacylglycerol lipase and CoA-independent acylglycerol transacylase activities and thus may play a role in acyl-chain remodeling of triglycerides. In vitro may express hydrolytic activity against glycerolipids triacylglycerol, diacylglycerol and monoacylglycerol, with a strong preference for oleic acid as the acyl moiety. However, the triacylglycerol hydrolase activity is controversial and may be very low. Possesses phospholipase A2 activity. This is 1-acylglycerol-3-phosphate O-acyltransferase PNPLA3 from Homo sapiens (Human).